The primary structure comprises 65 residues: Precursor peptide TigB (65 aa).

TIGSVS motif repeat units follow at residues 16-21 (TIGSVS), 23-28 (TIGSVS), 33-38 (TIGSVS), 40-45 (TIGSVS), 47-52 (TIGSVS), and 54-59 (TIGSVS). Residues Ile-17, Ile-24, Ile-34, Ile-41, Ile-48, and Ile-55 each carry the methylcyclopropylglycine modification.

Post-translationally, is subject to maturation by TigE, that catalyzes the formation of methylcyclopropylglycine (mCPG) residues from isoleucine residues residing in the repeating TIGSVS motifs.

Precursor peptide which undergoes post-translational modifications by tailoring enzymes, leading to the mature natural product. This chain is Precursor peptide TigB, found in Paramaledivibacter caminithermalis (strain DSM 15212 / CIP 107654 / DViRD3) (Clostridium caminithermale).